The chain runs to 350 residues: Protein CONSERVED ONLY IN THE GREEN LINEAGE 160, chloroplastic (350 aa).

The N-terminal 46 residues, 1-46 (MAILSYISATSTTPPIPQDQSPNSRLPTKIILPNKKPEKWSTGVAP), are a transit peptide targeting the chloroplast. A compositionally biased stretch (polar residues) spans 7–26 (ISATSTTPPIPQDQSPNSRL). The segment at 7 to 58 (ISATSTTPPIPQDQSPNSRLPTKIILPNKKPEKWSTGVAPGEYGGPPTTTKL) is disordered. Position 117 is a phosphoserine (S117). 4 consecutive transmembrane segments (helical) span residues 213–233 (KNKIQVLTLGIGGVGLVSAYI), 239–259 (IALSFGAGLLGSLAYMRMLGN), 276–296 (ANQPRLLVPVVLVMIFNRWNA), and 304–324 (FMHLELIPMLVGFFTYKIATF).

Its subcellular location is the plastid. The protein resides in the chloroplast thylakoid membrane. Facilitates the assembly of the membrane proton channel of the chloroplastic F-type ATPase. Specifically required for the efficient assembly and integration of the CF(0) subunit c into the chloroplastic ATPase complex in the thylakoid membrane. In Arabidopsis thaliana (Mouse-ear cress), this protein is Protein CONSERVED ONLY IN THE GREEN LINEAGE 160, chloroplastic.